We begin with the raw amino-acid sequence, 1418 residues long: MLSQKFSPRRSGRHVTGSFESSFRFLREEDADVLRIRRGSMSPEPENKEKWLKMSYEAEKTCLLAPQESQTPCVCHTANEKYEIPGMGDDSVLEMLSYSKFSDLETWLCMPSTLLPRSRDSVCSLPPPSHENGTADTDRESRPPENTSINLSQCQERKTHLLPPSSLMPVSASPTSSTPLRTTSTPLPKPNRDSGQGGVSVRKRRRLAASPGGLHWDASGSVLRDHDRGETPSLSEVKRFPRSVDSESLVPELWRDRAPLRKTISIDDRLLQQTPREHHRLLSRLERGKKKLRNINSLGATGRYETHKKSESRISRLAQRLNQRQSDAALIKDFRPLFLLSGSAGSSQSLDRNFSISMSQQMQNLQLTQSKKGAGPASPSAAKRLYRNLSEKFKGSHSSFEDAYFFGRSDRIRKVSNIQSSEALFEAVEQQDLDAVQILLFQYTADELDLNTPNSEGLTPLDISIMTNNVPIAKLLLKAGGKESPHFVSLESRDAHLSALVQEAQRRASELSNQVMRESLSLETSDKEKQLKAWEWRCKLYKRMRTGFEHARQPEAPLMVRLSVTGSTTLTVSFQEPASMNSAVVTKYKVEWSCLKDFSLLAGELILENLQSLKCTITGLTMGRQYYVQVSAYNMKGWGPAQLSQPPSAVPSNWKDCDGRESRRRGHIEAMERLLQQVRATHQHYCCGDTSKLQNPSRKQSVSRSLKHLFHSSTKFVKSLKRGVYIASVFYHKDSLLVTNEDQIPIVEVDDSYSSSLMQDFLWFTKLSCMWEDVRWLRQSLAVSTSSSSTLQSRQKMLAAAGQLQNLLGTHNLGRVHYEPIKDRHGNVLLVTVREMDSLYSFFNGKWMQVSKLQSQRKSLSTPEEPYALDILLITIQDILAYQRRSQHRLSSGLYLGYLKLSSSVDQIKVLVPQRMPNMLCHTKIRDNWNVSRDEWEWLQSLSGPVEVERADQATGCLLFSELQTAIKSLLHQINLPLHQAKHFRLYTHEVLELGHNVSFLLLLPASDDVCSAPGQTNPYTPHSGFLNLPLQMFELVHFCSYKEKFISLYCRLSSVLDLDALITQQAFREAITDSEVSTAKQRHQHILDYIQQLDEMWREVRWITNALQYARYKQPLGWVPITWLVDVSVEPPVQKNDSTSSNTDYVPTPSPSPEMRRRKPTIESQPGSDEEGCSEVFLPTDSDYDSSDALSPRDLDLVYSSAQDLSHQAVHVLSGSAPDVLQMHDLKYSVCSKSILETESCTKDLEDLSLSSYSVKTTDKPSRSKFLADAPTKRKLLSKSHPQRSYFGGPHRWLRVQSESHTPSLSEGIYTRQSDIDLPLETPLSIPHSPTTSYSLDEYRQPYRESKPNVRRIFVESCSKTSPCRDAPHWEEEEEKGSRGATASGARPGYSSTSEAQDVDSDEQTNEQVSEILSSTL.

Residues 119 to 236 (RDSVCSLPPP…DRGETPSLSE (118 aa)) are disordered. Polar residues predominate over residues 144-154 (PENTSINLSQC). The span at 171-186 (SASPTSSTPLRTTSTP) shows a compositional bias: low complexity. Positions 223-236 (LRDHDRGETPSLSE) are enriched in basic and acidic residues. ANK repeat units lie at residues 419 to 450 (QSSEALFEAVEQQDLDAVQILLFQYTADELDL) and 456 to 485 (EGLTPLDISIMTNNVPIAKLLLKAGGKESP). The Fibronectin type-III domain occupies 556–652 (APLMVRLSVT…LSQPPSAVPS (97 aa)). The highly conserved peptide sequence stretch occupies residues 893–900 (GLYLGYLK). Disordered stretches follow at residues 1134–1179 (VQKN…EVFL), 1321–1343 (LETPLSIPHSPTTSYSLDEYRQP), and 1361–1418 (KTSP…SSTL). Over residues 1136-1146 (KNDSTSSNTDY) the composition is skewed to polar residues. Residues 1407 to 1418 (NEQVSEILSSTL) show a composition bias toward polar residues.

Required for vestibular-related functions. The chain is Ankyrin repeat and fibronectin type-III domain-containing protein 1 (ankfn1) from Danio rerio (Zebrafish).